A 325-amino-acid polypeptide reads, in one-letter code: Sensor histidine kinase YxdK (325 aa).

Residues 1 to 8 (MKLFLRSH) lie on the Cytoplasmic side of the membrane. Residues 9-29 (AVLILLFLLQGLFVFFYYWFA) form a helical membrane-spanning segment. Residues 30–33 (GLHS) are Extracellular-facing. Residues 34 to 54 (FSHLFYILGVQLLILAGYLAY) traverse the membrane as a helical segment. Topologically, residues 55-325 (RWYKDRGVYH…SVRFSFLTKM (271 aa)) are cytoplasmic. Positions 118–325 (QWVHQVKTPL…SVRFSFLTKM (208 aa)) constitute a Histidine kinase domain. Phosphohistidine; by autocatalysis is present on His-121.

The protein localises to the cell membrane. The enzyme catalyses ATP + protein L-histidine = ADP + protein N-phospho-L-histidine.. In terms of biological role, probable member of the two-component regulatory system YxdK/YxdJ. May activate YxdJ in response to the antibacterial protein LL-37. The chain is Sensor histidine kinase YxdK (yxdK) from Bacillus subtilis (strain 168).